The following is a 146-amino-acid chain: Snaclec coagulation factor IX/factor X-binding protein subunit B (146 aa).

An N-terminal signal peptide occupies residues 1–23 (MGRFIFMSFGFLVVFLSLSGTAA). The 123-residue stretch at 24–146 (DCPSDWSSYE…MAQFVCEFQA (123 aa)) folds into the C-type lectin domain. 3 cysteine pairs are disulfide-bonded: Cys-25/Cys-36, Cys-53/Cys-142, and Cys-119/Cys-134. Ca(2+) contacts are provided by Ser-64, Gln-66, and Glu-70. Glu-143 is a Ca(2+) binding site.

It belongs to the snaclec family. Heterodimer with subunit A of IX/X-bp or IX-bp; disulfide-linked. Expressed by the venom gland.

The protein localises to the secreted. Functionally, when linked to subunit A of IX/X-bp, anticoagulant protein which binds to the gamma-carboxyglutamic acid-domain regions of factors IX (F9) and factor X (10) in the presence of calcium with a 1 to 1 stoichiometry. Its function is as follows. When linked to subunit A of IX-bp, anticoagulant protein which binds to the gamma-carboxyglutamic acid-domain regions of factor IX (but not to factor X) in the presence of calcium with a 1 to 1 stoichiometry. The protein is Snaclec coagulation factor IX/factor X-binding protein subunit B of Protobothrops flavoviridis (Habu).